We begin with the raw amino-acid sequence, 193 residues long: Rho-related GTP-binding protein RhoA-A (193 aa).

GTP is bound by residues 12–19, 30–37, 59–63, 117–120, and 160–162; these read GDGACGKT, FPEVYVPT, DTAGQ, NKKD, and SAK. A glycan ((Microbial infection) O-linked (GlcNAc) tyrosine; by Yersinia Afp18) is linked at Tyr-34. Cys-190 bears the Cysteine methyl ester mark. A lipid anchor (S-geranylgeranyl cysteine) is attached at Cys-190. Residues 191 to 193 constitute a propeptide, removed in mature form; that stretch reads ALL.

This sequence belongs to the small GTPase superfamily. Rho family. In terms of processing, (Microbial infection) Glycosylated at Tyr-34 by Yersinia ruckeri toxin Afp18. Mono-O-GlcNAcylation by Afp18 inhibits RhoA activation by guanine nucleotide exchange factors and blocks RhoA signaling.

It localises to the cell membrane. In terms of biological role, regulates a signal transduction pathway linking plasma membrane receptors to the assembly of focal adhesions and actin stress fibers. In Danio rerio (Zebrafish), this protein is Rho-related GTP-binding protein RhoA-A.